Consider the following 427-residue polypeptide: MNYQRPKGTADILPGQSERWQQVEAVARKIFAQYQYHEIRTPIFENVDVFSRSAGDTSDIVTKEMYTFKDKGDRMMALRPEGTAGVVRAYVENKLYGPEHAKPYKVYYLGPMFRYERPQSGRQRQFHQIGVEAFGSDSPVLDAETLALAKQLLEALGAKHLKFVINSLGDPATRKAFHAALVDYLTPFKDQLSEDSKVRLVKNPLRILDSKDKHDQEIVANAPSILDYLTPEAQQHFDRVKTLLQGLGIPFEVDATMVRGLDYYNHTIFEVMSDDKVFGGGYTTILAGGRYNGLVEELGGPETPGIGFAMGVERLMLLMQGELPTAQPDAYIVTIDQGADQEALQMLTAIRQQGFTGEMDYMGRKPKGQFKAANKANAKLVLTIGESERAAGTVQIKNMATGDQQAFPQADVLADFGKIYTQVMEAK.

The protein belongs to the class-II aminoacyl-tRNA synthetase family. In terms of assembly, homodimer.

It is found in the cytoplasm. The catalysed reaction is tRNA(His) + L-histidine + ATP = L-histidyl-tRNA(His) + AMP + diphosphate + H(+). This is Histidine--tRNA ligase from Lacticaseibacillus casei (strain BL23) (Lactobacillus casei).